Reading from the N-terminus, the 305-residue chain is ATP synthase gamma chain (305 aa).

It belongs to the ATPase gamma chain family. In terms of assembly, F-type ATPases have 2 components, CF(1) - the catalytic core - and CF(0) - the membrane proton channel. CF(1) has five subunits: alpha(3), beta(3), gamma(1), delta(1), epsilon(1). CF(0) has three main subunits: a, b and c.

It is found in the cell membrane. In terms of biological role, produces ATP from ADP in the presence of a proton gradient across the membrane. The gamma chain is believed to be important in regulating ATPase activity and the flow of protons through the CF(0) complex. The polypeptide is ATP synthase gamma chain (Streptomyces griseus subsp. griseus (strain JCM 4626 / CBS 651.72 / NBRC 13350 / KCC S-0626 / ISP 5235)).